The primary structure comprises 632 residues: Phosphomethylpyrimidine synthase (632 aa).

Substrate is bound by residues Asn237, Met266, Tyr295, His331, Ser351–Gly353, Asp392–Arg395, and Glu431. His435 contributes to the Zn(2+) binding site. Residue Tyr458 coordinates substrate. Residue His499 participates in Zn(2+) binding. Cys579, Cys582, and Cys587 together coordinate [4Fe-4S] cluster.

This sequence belongs to the ThiC family. In terms of assembly, homodimer. It depends on [4Fe-4S] cluster as a cofactor.

The enzyme catalyses 5-amino-1-(5-phospho-beta-D-ribosyl)imidazole + S-adenosyl-L-methionine = 4-amino-2-methyl-5-(phosphooxymethyl)pyrimidine + CO + 5'-deoxyadenosine + formate + L-methionine + 3 H(+). The protein operates within cofactor biosynthesis; thiamine diphosphate biosynthesis. Functionally, catalyzes the synthesis of the hydroxymethylpyrimidine phosphate (HMP-P) moiety of thiamine from aminoimidazole ribotide (AIR) in a radical S-adenosyl-L-methionine (SAM)-dependent reaction. In Chromobacterium violaceum (strain ATCC 12472 / DSM 30191 / JCM 1249 / CCUG 213 / NBRC 12614 / NCIMB 9131 / NCTC 9757 / MK), this protein is Phosphomethylpyrimidine synthase.